The following is a 138-amino-acid chain: Large ribosomal subunit protein uL16 (138 aa).

This sequence belongs to the universal ribosomal protein uL16 family. In terms of assembly, part of the 50S ribosomal subunit.

Functionally, binds 23S rRNA and is also seen to make contacts with the A and possibly P site tRNAs. The chain is Large ribosomal subunit protein uL16 from Acholeplasma laidlawii (strain PG-8A).